Here is a 1818-residue protein sequence, read N- to C-terminus: Protein encore (1818 aa).

Disordered regions lie at residues 47-68 (ANSS…GVSG), 123-282 (SAAG…NSSN), and 317-413 (AERH…GFIS). Residues 52-66 (VGSGSGPGPGSGAGV) are compositionally biased toward gly residues. The span at 124-137 (AAGSSNLGRQNSFG) shows a compositional bias: polar residues. Over residues 141–152 (GNMKGKHLTRSH) the composition is skewed to basic residues. Low complexity-rich tracts occupy residues 156–179 (ESTS…QLQG), 186–199 (NNNN…AQSA), 217–233 (QQPQ…QQSV), and 266–282 (NSNG…NSSN). 2 positions are modified to phosphoserine: Ser267 and Ser270. Over residues 317–328 (AERHDRHERHEM) the composition is skewed to basic and acidic residues. Ser336 is subject to Phosphoserine. The segment covering 338-348 (NHDEEPYHYEP) has biased composition (basic and acidic residues). Composition is skewed to low complexity over residues 372 to 381 (NLGGSSSGSI) and 391 to 410 (NCNN…NTSG). An R3H domain is found at 444–508 (RNILLKIEKD…QCVIVAVAKN (65 aa)). In terms of domain architecture, SUZ spans 510 to 576 (RIPEIRFQSL…ARSRIFSRTG (67 aa)). Ser535 bears the Phosphoserine mark. Residues 557–568 (FEEREEDYDRAR) are compositionally biased toward basic and acidic residues. Disordered stretches follow at residues 557–806 (FEER…SYEQ), 885–916 (QEQE…SQTP), 936–959 (PYSQ…EEPK), 1176–1249 (GQAP…YNPS), 1332–1648 (AAAG…LVSH), and 1684–1709 (GAGA…RSHI). The segment covering 592 to 606 (YGGWEQQQQQQKQSQ) has biased composition (low complexity). Gly residues predominate over residues 644 to 655 (NYGGPPSSGGPG). Polar residues predominate over residues 678–695 (QDSTGSTPWRLSPSSSGS). Low complexity predominate over residues 713–771 (SGNQYQSQNQGNSSSGGYNNYRKSSPHQQQQSQQQQQSQQHHQQQLQQPQQLHQQSSQQ). The segment covering 772–784 (YATTELSCSSTES) has biased composition (polar residues). Residues 893 to 904 (AGPSSSGSATSS) show a composition bias toward low complexity. Low complexity predominate over residues 1176 to 1197 (GQAPMQQQAPHTGAGTTTGPPT). A compositionally biased stretch (polar residues) spans 1220–1231 (SSNGSVVTSSAY). A compositionally biased stretch (low complexity) spans 1381–1392 (ASQSAPSTPAAP). Polar residues predominate over residues 1430 to 1443 (TPHYYQGQNSNEGY). Residues 1503–1521 (ASPSSVSLGGASSSGGANS) show a composition bias toward low complexity. 2 stretches are compositionally biased toward polar residues: residues 1554 to 1565 (AANSSPGVSSYE) and 1579 to 1596 (FRSQ…VSQR). The segment covering 1608–1633 (SHESSNNSPNSIVGSQSNSAANTPNA) has biased composition (low complexity). Residues 1684–1705 (GAGASGAAGSNGGHQPGGGGGA) are compositionally biased toward gly residues.

Interacts with hfp; however, given the nuclear localization of hfp, the relevance of such interaction is unclear. Interacts with CycE, Cul1, and the SCF-proteasome complex. Expressed in all germline cells of the germarium including the stem cells and dividing cystocytes.

Its subcellular location is the cytoplasm. Functionally, required for the regulation of germline mitosis, karyosome formation, and establishment of dorsoventral (DS) polarity of the egg and embryo. Involved in proper grk mRNA localization and translation in the oocyte. May control germline mitosis by facilitating the cyclin E (CycE) proteolysis by the SCF-ubiquitin-proteasome complex. The chain is Protein encore (enc) from Drosophila melanogaster (Fruit fly).